A 130-amino-acid chain; its full sequence is Small ribosomal subunit protein uS11c (130 aa).

The protein belongs to the universal ribosomal protein uS11 family. In terms of assembly, part of the 30S ribosomal subunit.

The protein localises to the plastid. Its subcellular location is the chloroplast. This is Small ribosomal subunit protein uS11c from Cycas taitungensis (Prince sago).